The primary structure comprises 348 residues: Eukaryotic translation initiation factor 3 subunit F (348 aa).

One can recognise an MPN domain in the interval 30–166; it reads VVIQPQAIFS…TRTYISAPVG (137 aa). Gly residues predominate over residues 312 to 327; sequence STAIGGTGAESGGQRG. The segment at 312-348 is disordered; that stretch reads STAIGGTGAESGGQRGGQRNNRQRGGQQRNQAEELRA. Over residues 328–341 the composition is skewed to low complexity; the sequence is GQRNNRQRGGQQRN.

The protein belongs to the eIF-3 subunit F family. In terms of assembly, component of the eukaryotic translation initiation factor 3 (eIF-3) complex.

The protein localises to the cytoplasm. Functionally, component of the eukaryotic translation initiation factor 3 (eIF-3) complex, which is involved in protein synthesis of a specialized repertoire of mRNAs and, together with other initiation factors, stimulates binding of mRNA and methionyl-tRNAi to the 40S ribosome. The eIF-3 complex specifically targets and initiates translation of a subset of mRNAs involved in cell proliferation. The polypeptide is Eukaryotic translation initiation factor 3 subunit F (Coccidioides immitis (strain RS) (Valley fever fungus)).